Reading from the N-terminus, the 646-residue chain is Threonine--tRNA ligase (646 aa).

The TGS domain maps to Met-1–Thr-63. The segment at Asp-247–Pro-544 is catalytic. Zn(2+)-binding residues include Cys-344, His-395, and His-521.

The protein belongs to the class-II aminoacyl-tRNA synthetase family. Homodimer. Zn(2+) serves as cofactor.

It is found in the cytoplasm. The enzyme catalyses tRNA(Thr) + L-threonine + ATP = L-threonyl-tRNA(Thr) + AMP + diphosphate + H(+). Its function is as follows. Catalyzes the attachment of threonine to tRNA(Thr) in a two-step reaction: L-threonine is first activated by ATP to form Thr-AMP and then transferred to the acceptor end of tRNA(Thr). Also edits incorrectly charged L-seryl-tRNA(Thr). This Cereibacter sphaeroides (strain ATCC 17029 / ATH 2.4.9) (Rhodobacter sphaeroides) protein is Threonine--tRNA ligase.